The sequence spans 152 residues: MSQLEQKLTEMLTAPVEALGFEMVGIEFVRAGKHSTMRVYIDHPDGISVDHCAEVSHQVSAVLDVEDPINTEYNLEVSSPGMERPLFKLQHYIESVGEVVTLRLKMPMGDRRNFKGKLLSEADGMLTIEVDNQEFVLAFANIEKGNVVPTFD.

This sequence belongs to the RimP family.

The protein resides in the cytoplasm. Functionally, required for maturation of 30S ribosomal subunits. In Pseudoalteromonas atlantica (strain T6c / ATCC BAA-1087), this protein is Ribosome maturation factor RimP.